A 190-amino-acid polypeptide reads, in one-letter code: Glycerol-3-phosphate acyltransferase 2 (190 aa).

A run of 5 helical transmembrane segments spans residues Met1–Val21, Val53–Leu73, Thr76–Ala96, Val110–Leu130, and Leu152–Ile172.

It belongs to the PlsY family. As to quaternary structure, probably interacts with PlsX.

The protein localises to the cell membrane. The enzyme catalyses an acyl phosphate + sn-glycerol 3-phosphate = a 1-acyl-sn-glycero-3-phosphate + phosphate. The protein operates within lipid metabolism; phospholipid metabolism. In terms of biological role, catalyzes the transfer of an acyl group from acyl-phosphate (acyl-PO(4)) to glycerol-3-phosphate (G3P) to form lysophosphatidic acid (LPA). This enzyme utilizes acyl-phosphate as fatty acyl donor, but not acyl-CoA or acyl-ACP. In Bacillus anthracis, this protein is Glycerol-3-phosphate acyltransferase 2.